The chain runs to 177 residues: 2''-aminoglycoside nucleotidyltransferase (177 aa).

Positions 1 to 92 (MDTTQVTLIH…ELLDCEPAWW (92 aa)) are N-terminal domain. Residues aspartate 44, aspartate 46, and aspartate 86 each coordinate Mg(2+). Catalysis depends on aspartate 86, which acts as the Proton acceptor. Residues 93-177 (ADEAYEIAEA…RAAFRSRYAA (85 aa)) are C-terminal domain. Residue alanine 100 coordinates kanamycin A.

As to quaternary structure, monomer. The cofactor is Mg(2+).

It carries out the reaction nucleoside triphosphate + gentamicin = diphosphate + 2''-nucleotidylgentamicin.. Its function is as follows. Mediates bacterial resistance to kanamycin, gentamicin, dibekacin, sisomicin and tobramycin by adenylating the 2''-hydroxyl group of these antibiotics. The chain is 2''-aminoglycoside nucleotidyltransferase from Klebsiella pneumoniae.